A 207-amino-acid chain; its full sequence is Cytochrome bo(3) ubiquinol oxidase subunit 3 (207 aa).

Topologically, residues 1–26 (MSSQVMHGAAHGHDHGHDDHHHDSGQ) are cytoplasmic. A helical transmembrane segment spans residues 27 to 47 (MTVLGFWLYLMTDCILFASLF). Residues 48–70 (ATYAVLSGSFAGGPSGHDIFQLD) lie on the Periplasmic side of the membrane. The helical transmembrane segment at 71–91 (FVAVETLFLLLSSITFGFAML) threads the bilayer. The Cytoplasmic segment spans residues 92–99 (KMFDGKKA). A helical membrane pass occupies residues 100-120 (GVLGWLAVTFLFGAGFIAMEI). The Periplasmic portion of the chain corresponds to 121-141 (YEFHHLIAEGFGPQRSGFLSG). Residues 142–162 (FFALVGTHGLHVTAGLIWMAI) form a helical membrane-spanning segment. The Cytoplasmic portion of the chain corresponds to 163–185 (MMYQINKHGITPTAKTRMSCLSL). A helical membrane pass occupies residues 186–206 (FWHFLDVVWICVFTVVYLLGV). Position 207 (Leu-207) is a topological domain, periplasmic.

This sequence belongs to the cytochrome c oxidase subunit 3 family. Heterooctamer of two A chains, two B chains, two C chains and two D chains.

It is found in the cell inner membrane. Its function is as follows. Cytochrome bo(3) ubiquinol terminal oxidase is the component of the aerobic respiratory chain of E.coli that predominates when cells are grown at high aeration. Has proton pump activity across the membrane in addition to electron transfer, pumping 2 protons/electron. This Pseudomonas putida (Arthrobacter siderocapsulatus) protein is Cytochrome bo(3) ubiquinol oxidase subunit 3 (cyoC).